The following is a 2491-amino-acid chain: Cation-independent mannose-6-phosphate receptor (2491 aa).

Positions 1-40 (MGAAAGRSPHLGPAPARRPQRSLLLLQLLLLVAAPGSTQA) are cleaved as a signal peptide. The Lumenal portion of the chain corresponds to 41–2304 (QAAPFPELCS…MHKGLSERSQ (2264 aa)). 12 consecutive MRH domains span residues 47–163 (ELCS…ACKK), 172–320 (VPCY…ACHR), 326–468 (KTCS…ACVK), 473–619 (LLCG…ACVL), 625–762 (ENCT…ACPE), 765–924 (LECV…ACPI), 932–1079 (QACS…ACVP), 1082–1219 (VDCQ…ACPV), 1225–1363 (DNCE…ACPP), 1367–1508 (TECS…ACPM), 1514–1648 (DDCQ…ACEQ), and 1650–1797 (TECS…VCPD). 2 disulfides stabilise this stretch: Cys-49/Cys-69 and Cys-77/Cys-84. A glycan (N-linked (GlcNAc...) asparagine) is linked at Asn-112. 8 disulfides stabilise this stretch: Cys-117/Cys-149, Cys-134/Cys-161, Cys-174/Cys-212, Cys-228/Cys-235, Cys-275/Cys-306, Cys-288/Cys-318, Cys-328/Cys-366, and Cys-374/Cys-382. Residues Asn-400 and Asn-435 are each glycosylated (N-linked (GlcNAc...) asparagine). 4 disulfide bridges follow: Cys-420-Cys-454, Cys-434-Cys-466, Cys-475-Cys-519, and Cys-531-Cys-538. N-linked (GlcNAc...) asparagine glycans are attached at residues Asn-543 and Asn-581. 2 cysteine pairs are disulfide-bonded: Cys-572-Cys-605 and Cys-586-Cys-617. N-linked (GlcNAc...) asparagine glycosylation is present at Asn-626. Disulfide bonds link Cys-627–Cys-664, Cys-672–Cys-679, Cys-731–Cys-760, Cys-767–Cys-814, and Cys-823–Cys-830. Asn-747 carries N-linked (GlcNAc...) asparagine glycosylation. N-linked (GlcNAc...) asparagine glycosylation occurs at Asn-871. Intrachain disulfides connect Cys-875–Cys-910, Cys-893–Cys-922, Cys-934–Cys-970, Cys-976–Cys-987, Cys-1042–Cys-1077, Cys-1084–Cys-1125, and Cys-1134–Cys-1142. Residues Asn-951 and Asn-957 are each glycosylated (N-linked (GlcNAc...) asparagine). Asn-1164 carries an N-linked (GlcNAc...) asparagine glycan. Intrachain disulfides connect Cys-1177–Cys-1205, Cys-1190–Cys-1217, Cys-1227–Cys-1262, and Cys-1270–Cys-1282. A glycan (N-linked (GlcNAc...) asparagine) is linked at Asn-1246. N-linked (GlcNAc...) asparagine glycosylation occurs at Asn-1312. Intrachain disulfides connect Cys-1319–Cys-1349, Cys-1333–Cys-1361, Cys-1369–Cys-1408, Cys-1420–Cys-1427, Cys-1461–Cys-1494, Cys-1476–Cys-1506, Cys-1516–Cys-1553, Cys-1559–Cys-1566, Cys-1598–Cys-1634, Cys-1614–Cys-1646, Cys-1652–Cys-1695, Cys-1706–Cys-1713, Cys-1750–Cys-1783, Cys-1766–Cys-1795, Cys-1804–Cys-1839, Cys-1850–Cys-1856, Cys-1893–Cys-1975, Cys-1903–Cys-1927, Cys-1917–Cys-1942, Cys-1957–Cys-1987, Cys-1994–Cys-2029, Cys-2039–Cys-2046, Cys-2082–Cys-2113, and Cys-2096–Cys-2125. An N-linked (GlcNAc...) asparagine glycan is attached at Asn-1656. Residue Asn-1757 is glycosylated (N-linked (GlcNAc...) asparagine). In terms of domain architecture, Fibronectin type-II spans 1802–1989 (DGCTLTDEQL…EWKTKVVCPP (188 aa)). Residue Asn-1816 is glycosylated (N-linked (GlcNAc...) asparagine). MRH domains lie at 1992 to 2127 (LECK…ACAV) and 2135 to 2280 (VNGT…VCPL). N-linked (GlcNAc...) asparagine glycosylation occurs at Asn-2085. An N-linked (GlcNAc...) asparagine glycan is attached at Asn-2136. 3 disulfide bridges follow: Cys-2188–Cys-2194, Cys-2232–Cys-2266, and Cys-2248–Cys-2278. The helical transmembrane segment at 2305-2327 (AVGAVLSLLLVALTCCLLALLLY) threads the bilayer. Over 2328-2491 (KKERRETVIS…DDSDEDLLHI (164 aa)) the chain is Cytoplasmic. Lys-2352 is modified (N6-acetyllysine). Ser-2409 bears the Phosphoserine mark. The segment at 2424–2491 (GRGAGAESSH…DDSDEDLLHI (68 aa)) is disordered. Arg-2425 carries the post-translational modification Omega-N-methylarginine. Basic and acidic residues predominate over residues 2444–2459 (QEREDDRVGLVRGEKA). The segment covering 2464–2477 (SSSAQQKTVSSTKL) has biased composition (polar residues). A phosphoserine mark is found at Ser-2479 and Ser-2484. Basic and acidic residues predominate over residues 2479-2491 (SFHDDSDEDLLHI).

Belongs to the MRL1/IGF2R family. Binds HA-I and HA-II plasma membrane adapters. Interacts with DPP4; the interaction is direct. Binds GGA1, GGA2 and GGA3. Interacts with the heterotrimeric retromer cargo-selective complex (CSC), formed by VPS26 (VPS26A or VPS26B), VPS29 and VPS35; which is involved in retrograde trafficking of the receptor from endosomes to the Golgi apparatus. In terms of processing, palmitoylated. Undergoes cysteine S-palmitoylation which promotes interaction with the retromer cargo-selective complex which mediates its retrograde trafficking to the Golgi apparatus.

The protein localises to the golgi apparatus membrane. It localises to the endosome membrane. In terms of biological role, mediates the transport of phosphorylated lysosomal enzymes from the Golgi complex and the cell surface to lysosomes. Lysosomal enzymes bearing phosphomannosyl residues bind specifically to mannose-6-phosphate receptors in the Golgi apparatus and the resulting receptor-ligand complex is transported to an acidic prelysosomal compartment where the low pH mediates the dissociation of the complex. The receptor is then recycled back to the Golgi for another round of trafficking through its binding to the retromer. This receptor also binds IGF2. Acts as a positive regulator of T-cell coactivation by binding DPP4. The chain is Cation-independent mannose-6-phosphate receptor (IGF2R) from Homo sapiens (Human).